The sequence spans 276 residues: Diaminopimelate epimerase (276 aa).

N13, Q46, and N66 together coordinate substrate. Catalysis depends on C75, which acts as the Proton donor. Substrate is bound by residues 76 to 77 (GN), N159, N192, and 210 to 211 (ER). Residue C219 is the Proton acceptor of the active site. Residue 220–221 (GT) coordinates substrate.

It belongs to the diaminopimelate epimerase family. As to quaternary structure, homodimer.

It is found in the cytoplasm. It catalyses the reaction (2S,6S)-2,6-diaminopimelate = meso-2,6-diaminopimelate. The protein operates within amino-acid biosynthesis; L-lysine biosynthesis via DAP pathway; DL-2,6-diaminopimelate from LL-2,6-diaminopimelate: step 1/1. Functionally, catalyzes the stereoinversion of LL-2,6-diaminopimelate (L,L-DAP) to meso-diaminopimelate (meso-DAP), a precursor of L-lysine and an essential component of the bacterial peptidoglycan. The sequence is that of Diaminopimelate epimerase from Ectopseudomonas mendocina (strain ymp) (Pseudomonas mendocina).